Consider the following 388-residue polypeptide: Succinate--CoA ligase [ADP-forming] subunit beta (388 aa).

The region spanning 9-245 is the ATP-grasp domain; sequence KELLASYGLP…KSQENERELK (237 aa). Residues Lys-46, 53–55, Glu-100, Tyr-103, and Glu-108 contribute to the ATP site; that span reads GRG. Mg(2+) is bound by residues Asn-200 and Asp-214. Residues Asn-265 and 322 to 324 contribute to the substrate site; that span reads GIV.

This sequence belongs to the succinate/malate CoA ligase beta subunit family. As to quaternary structure, heterotetramer of two alpha and two beta subunits. Mg(2+) serves as cofactor.

It carries out the reaction succinate + ATP + CoA = succinyl-CoA + ADP + phosphate. The enzyme catalyses GTP + succinate + CoA = succinyl-CoA + GDP + phosphate. It functions in the pathway carbohydrate metabolism; tricarboxylic acid cycle; succinate from succinyl-CoA (ligase route): step 1/1. Its function is as follows. Succinyl-CoA synthetase functions in the citric acid cycle (TCA), coupling the hydrolysis of succinyl-CoA to the synthesis of either ATP or GTP and thus represents the only step of substrate-level phosphorylation in the TCA. The beta subunit provides nucleotide specificity of the enzyme and binds the substrate succinate, while the binding sites for coenzyme A and phosphate are found in the alpha subunit. This is Succinate--CoA ligase [ADP-forming] subunit beta from Neisseria gonorrhoeae (strain NCCP11945).